We begin with the raw amino-acid sequence, 235 residues long: MIFNVLTIFPDMFPGPLGYSTVGNALRKGLWSLNVVDIRSFASDKHSTVDDKPYGGGPGMLMKADVLGRCIDSVLEAHPDTRLVYTSPKGKQFTQDMSRQIVHFGNITLLCGRFEGIDERVVDVYNFQEVSIGDYVISGGELAAMVVIDSCVRMVTGVIGNKDSLTRESFDCGLEYPQYTRPASWKGVSVPDVLLRGNHKETELWRCKMSRIITERRRPDLLKDCGGEEEGSSNE.

S-adenosyl-L-methionine-binding positions include Gly112 and 132-137; that span reads IGDYVI.

This sequence belongs to the RNA methyltransferase TrmD family. As to quaternary structure, homodimer.

The protein localises to the cytoplasm. It catalyses the reaction guanosine(37) in tRNA + S-adenosyl-L-methionine = N(1)-methylguanosine(37) in tRNA + S-adenosyl-L-homocysteine + H(+). Functionally, specifically methylates guanosine-37 in various tRNAs. The protein is tRNA (guanine-N(1)-)-methyltransferase of Anaplasma marginale (strain Florida).